The primary structure comprises 227 residues: 7-cyano-7-deazaguanine synthase (227 aa).

9 to 19 (LSGGLDSATVL) is a binding site for ATP. Residues Cys189, Cys199, Cys202, and Cys205 each coordinate Zn(2+).

Belongs to the QueC family. Zn(2+) is required as a cofactor.

The enzyme catalyses 7-carboxy-7-deazaguanine + NH4(+) + ATP = 7-cyano-7-deazaguanine + ADP + phosphate + H2O + H(+). It participates in purine metabolism; 7-cyano-7-deazaguanine biosynthesis. Its function is as follows. Catalyzes the ATP-dependent conversion of 7-carboxy-7-deazaguanine (CDG) to 7-cyano-7-deazaguanine (preQ(0)). The polypeptide is 7-cyano-7-deazaguanine synthase (Cupriavidus necator (strain ATCC 17699 / DSM 428 / KCTC 22496 / NCIMB 10442 / H16 / Stanier 337) (Ralstonia eutropha)).